A 310-amino-acid chain; its full sequence is ADP-L-glycero-D-manno-heptose-6-epimerase (310 aa).

Residues F10–I11, D31–N32, K38, K53, E75–S79, and N92 each bind NADP(+). The active-site Proton acceptor is Y140. K144 lines the NADP(+) pocket. N169 is a binding site for substrate. NADP(+)-binding residues include V170 and K178. The Proton acceptor role is filled by K178. Substrate is bound by residues S180, H187, F201–S204, and R209. Position 267 is an N6-acetyllysine (K267). Y272 contributes to the substrate binding site.

The protein belongs to the NAD(P)-dependent epimerase/dehydratase family. HldD subfamily. Homopentamer. The cofactor is NADP(+). NAD(+) serves as cofactor.

The catalysed reaction is ADP-D-glycero-beta-D-manno-heptose = ADP-L-glycero-beta-D-manno-heptose. It functions in the pathway nucleotide-sugar biosynthesis; ADP-L-glycero-beta-D-manno-heptose biosynthesis; ADP-L-glycero-beta-D-manno-heptose from D-glycero-beta-D-manno-heptose 7-phosphate: step 4/4. The protein operates within bacterial outer membrane biogenesis; LPS core biosynthesis. With respect to regulation, completely inhibited by ADP and ADP-glucose, and partially inhibited by ATP and NADH. Its function is as follows. Catalyzes the interconversion between ADP-D-glycero-beta-D-manno-heptose and ADP-L-glycero-beta-D-manno-heptose via an epimerization at carbon 6 of the heptose. This is ADP-L-glycero-D-manno-heptose-6-epimerase (hldD) from Escherichia coli (strain K12).